The primary structure comprises 325 residues: Bifunctional ligase/repressor BirA (325 aa).

Residues 23–42 (GQKISDALGCSRTAVWKHIE) constitute a DNA-binding region (H-T-H motif). The 189-residue stretch at 74–262 (RFGLKTEVMG…CFEKRYRDYM (189 aa)) folds into the BPL/LPL catalytic domain. Biotin is bound by residues Q118, 122–124 (RGR), and K189.

Belongs to the biotin--protein ligase family.

It carries out the reaction biotin + L-lysyl-[protein] + ATP = N(6)-biotinyl-L-lysyl-[protein] + AMP + diphosphate + H(+). In terms of biological role, acts both as a biotin--[acetyl-CoA-carboxylase] ligase and a repressor. This is Bifunctional ligase/repressor BirA from Bacillus subtilis (strain 168).